An 82-amino-acid polypeptide reads, in one-letter code: Small ribosomal subunit protein bS16c (82 aa).

This sequence belongs to the bacterial ribosomal protein bS16 family.

It is found in the plastid. It localises to the chloroplast. The sequence is that of Small ribosomal subunit protein bS16c from Porphyra purpurea (Red seaweed).